We begin with the raw amino-acid sequence, 123 residues long: MSVKIFGKGKKAALKRRHARIRKRISGTAERPRLVVTRSNRHMVAQIVDDNAGKTLVSESTLMADFADFQGTKTEAAKKVGELLAKKAKDAGITTVVFDRGGNMYHGRVAAVAEGAREGGLAL.

Belongs to the universal ribosomal protein uL18 family. As to quaternary structure, part of the 50S ribosomal subunit; part of the 5S rRNA/L5/L18/L25 subcomplex. Contacts the 5S and 23S rRNAs.

This is one of the proteins that bind and probably mediate the attachment of the 5S RNA into the large ribosomal subunit, where it forms part of the central protuberance. The sequence is that of Large ribosomal subunit protein uL18 from Bifidobacterium animalis subsp. lactis (strain AD011).